The chain runs to 403 residues: ATP phosphoribosyltransferase regulatory subunit (403 aa).

This sequence belongs to the class-II aminoacyl-tRNA synthetase family. HisZ subfamily. In terms of assembly, heteromultimer composed of HisG and HisZ subunits.

It localises to the cytoplasm. The protein operates within amino-acid biosynthesis; L-histidine biosynthesis; L-histidine from 5-phospho-alpha-D-ribose 1-diphosphate: step 1/9. In terms of biological role, required for the first step of histidine biosynthesis. May allow the feedback regulation of ATP phosphoribosyltransferase activity by histidine. This is ATP phosphoribosyltransferase regulatory subunit from Nostoc punctiforme (strain ATCC 29133 / PCC 73102).